The following is a 40-amino-acid chain: VGPHLDDYGGEALHRNFEVYPQTKTYFPHFDASAGSNQLK.

The Globin domain maps to 1–40 (VGPHLDDYGGEALHRNFEVYPQTKTYFPHFDASAGSNQLK).

The protein belongs to the globin family. Heterotetramer of two alpha chains and two beta chains. Red blood cells.

Involved in oxygen transport from the lung to the various peripheral tissues. This Saara hardwickii (Indian spiny-tailed lizard) protein is Hemoglobin subunit alpha-2.